Consider the following 129-residue polypeptide: M-zodatoxin-Lt8b (129 aa).

Positions 1 to 20 are cleaved as a signal peptide; sequence MKYFVVALALVAAFACIAES. Positions 21-60 are excised as a propeptide; the sequence is KPAESEHELAEVEEENELADLEDAVWLEHLADLSDLEEAR. The Processing quadruplet motif motif lies at 57–60; that stretch reads EEAR.

In terms of processing, cleavage of the propeptide depends on the processing quadruplet motif (XXXR, with at least one of X being E). As to expression, expressed by the venom gland.

The protein resides in the secreted. Functionally, insecticidal, cytolytic and antimicrobial peptide. Forms voltage-dependent, ion-permeable channels in membranes. At high concentration causes cell membrane lysis. The polypeptide is M-zodatoxin-Lt8b (cit 1-2) (Lachesana tarabaevi (Spider)).